The sequence spans 443 residues: Threonine/serine transporter TdcC (443 aa).

A run of 11 helical transmembrane segments spans residues 24-44 (WVLG…PISA), 45-65 (GIGG…IAFF), 95-115 (VGGV…LWIY), 140-160 (VVAL…KDLM), 163-183 (VMGY…LSLI), 207-227 (ILVT…FSPI), 259-279 (ASVL…FTLS), 319-339 (ASII…LGTL), 363-383 (LNMI…YINP), 385-405 (ILDL…CLLP), and 423-443 (SNYF…YQLM).

This sequence belongs to the amino acid/polyamine transporter 2 family. SdaC/TdcC subfamily.

It is found in the cell inner membrane. The catalysed reaction is L-threonine(in) + H(+)(in) = L-threonine(out) + H(+)(out). The enzyme catalyses L-serine(in) + H(+)(in) = L-serine(out) + H(+)(out). Involved in the import of threonine and serine into the cell, with the concomitant import of a proton (symport system). This Edwardsiella tarda protein is Threonine/serine transporter TdcC.